The primary structure comprises 982 residues: Serine/threonine-protein kinase SULU (982 aa).

In terms of domain architecture, Protein kinase spans 30–289 (YQDLREIGHG…AEECFRHPFI (260 aa)). Residues 36–44 (IGHGSFGAV) and Lys59 each bind ATP. Catalysis depends on Asp153, which acts as the Proton acceptor. 4 disordered regions span residues 331–484 (GKEG…PLDT), 592–620 (QNNE…QNQQ), 751–789 (LETQ…RDLK), and 957–982 (RTGS…QMAM). Positions 353–373 (SIGRAGDSASSRSASLTSFRS) are enriched in low complexity. Residues 421–431 (QMLSSTSTSGV) show a composition bias toward polar residues. The segment covering 459 to 472 (IPTSQPTSKSESSS) has biased composition (low complexity). Residues 595-608 (ELDKRKKDIEDGEK) are compositionally biased toward basic and acidic residues. Over residues 759–768 (SASQNEYTQR) the composition is skewed to polar residues. Residues 957–967 (RTGSTSRSSGG) show a composition bias toward low complexity. Over residues 973 to 982 (GNSSSIQMAM) the composition is skewed to polar residues.

Belongs to the protein kinase superfamily. Ser/Thr protein kinase family. STE20 subfamily. Mg(2+) serves as cofactor. As to expression, expressed in the pharynx, including the pharyngeal muscle of the metacorpus, the isthmus, and the terminal bulb; in the intestine, including the pharyngeointestinal valve between the pharynx and the intestine, a structure near the anus likely to be the anal sphincter and the excretory cell and in several ring neurons.

It is found in the cytoplasm. It localises to the cytoskeleton. The protein resides in the cell cortex. It carries out the reaction L-seryl-[protein] + ATP = O-phospho-L-seryl-[protein] + ADP + H(+). It catalyses the reaction L-threonyl-[protein] + ATP = O-phospho-L-threonyl-[protein] + ADP + H(+). In terms of biological role, acts as a negative regulator of cortical contractions during early embryonic cell division, possibly by regulating rho-1-dependent actomyosin contractility. Plays a role in polarity establishment in early embryos by regulating the size of the anterior and posterior cortex in the first asymmetric cell division. Might play a role in cell cycle progression. In the germline, involved in the regulation of meiotic progression during oogenesis, possibly by modulating the timing of mpk-1 activation. Plays a role in meiotic recombination events. Involved in pharyngeal pumping. The chain is Serine/threonine-protein kinase SULU (kin-18) from Caenorhabditis elegans.